Reading from the N-terminus, the 102-residue chain is Small ribosomal subunit protein uS10 (102 aa).

It belongs to the universal ribosomal protein uS10 family. In terms of assembly, part of the 30S ribosomal subunit.

Functionally, involved in the binding of tRNA to the ribosomes. This Akkermansia muciniphila (strain ATCC BAA-835 / DSM 22959 / JCM 33894 / BCRC 81048 / CCUG 64013 / CIP 107961 / Muc) protein is Small ribosomal subunit protein uS10.